Here is a 54-residue protein sequence, read N- to C-terminus: uncharacterized protein (54 aa).

The tract at residues 34–54 (NNREKQKSGKLRELRRGFKTF) is disordered.

This is an uncharacterized protein from Acidianus two-tailed virus (ATV).